The following is a 166-amino-acid chain: UPF0336 protein Mb0656 (166 aa).

It belongs to the UPF0336 family.

The chain is UPF0336 protein Mb0656 from Mycobacterium bovis (strain ATCC BAA-935 / AF2122/97).